The following is a 104-amino-acid chain: Iron-sulfur cluster assembly protein CyaY (104 aa).

The protein belongs to the frataxin family.

Involved in iron-sulfur (Fe-S) cluster assembly. May act as a regulator of Fe-S biogenesis. This chain is Iron-sulfur cluster assembly protein CyaY, found in Vibrio parahaemolyticus serotype O3:K6 (strain RIMD 2210633).